The primary structure comprises 80 residues: Phosphoribosylformylglycinamidine synthase subunit PurS (80 aa).

This sequence belongs to the PurS family. Homodimer. Part of the FGAM synthase complex composed of 1 PurL, 1 PurQ and 2 PurS subunits.

The protein localises to the cytoplasm. It catalyses the reaction N(2)-formyl-N(1)-(5-phospho-beta-D-ribosyl)glycinamide + L-glutamine + ATP + H2O = 2-formamido-N(1)-(5-O-phospho-beta-D-ribosyl)acetamidine + L-glutamate + ADP + phosphate + H(+). The protein operates within purine metabolism; IMP biosynthesis via de novo pathway; 5-amino-1-(5-phospho-D-ribosyl)imidazole from N(2)-formyl-N(1)-(5-phospho-D-ribosyl)glycinamide: step 1/2. Its function is as follows. Part of the phosphoribosylformylglycinamidine synthase complex involved in the purines biosynthetic pathway. Catalyzes the ATP-dependent conversion of formylglycinamide ribonucleotide (FGAR) and glutamine to yield formylglycinamidine ribonucleotide (FGAM) and glutamate. The FGAM synthase complex is composed of three subunits. PurQ produces an ammonia molecule by converting glutamine to glutamate. PurL transfers the ammonia molecule to FGAR to form FGAM in an ATP-dependent manner. PurS interacts with PurQ and PurL and is thought to assist in the transfer of the ammonia molecule from PurQ to PurL. This is Phosphoribosylformylglycinamidine synthase subunit PurS from Archaeoglobus fulgidus (strain ATCC 49558 / DSM 4304 / JCM 9628 / NBRC 100126 / VC-16).